A 184-amino-acid chain; its full sequence is Zinc metalloproteinase-disintegrin-like ammodytagin (184 aa).

The Peptidase M12B domain occupies 1-90 (KSAAXVTLDL…CPAKCIDNKP (90 aa)). Aspartate 20 lines the Ca(2+) pocket. Histidine 64 provides a ligand contact to Zn(2+). Residue glutamate 65 is part of the active site. Zn(2+)-binding residues include histidine 68 and histidine 74. Residues asparagine 88, valine 100, asparagine 103, phenylalanine 105, and glutamate 107 each contribute to the Ca(2+) site. The region spanning 98-124 (PAVCGNYFVELTPGSQCADGVCCDQCR) is the Disintegrin domain. 2 cysteine pairs are disulfide-bonded: cysteine 114/cysteine 120 and cysteine 165/cysteine 177.

This sequence belongs to the venom metalloproteinase (M12B) family. P-III subfamily. P-IIIc sub-subfamily. As to quaternary structure, heterodimer; disulfide-linked. It depends on Zn(2+) as a cofactor. Post-translationally, the N-terminus is blocked. N-glycosylated. In terms of tissue distribution, expressed by the venom gland.

It localises to the secreted. Its activity is regulated as follows. Inhibited by EDTA, DTT and zinc ions. Partially inhibited by L-cysteine. Not inhibited by 2-propanol or PMSF. Activity is enhanced by calcium or magnesium ions. Functionally, snake venom zinc metalloprotease that has fibrinogenolytic and hemorrhagic activities in mouse and rats. Hydrolyzes the Aalpha-chain (FGA) and more slowly the Bbeta-chain of fibrinogen (FGB), without affecting the gamma-chain. Its hemorrhagic activity results of its involvement in cleavage of basal membrane components (nidogen and fibronectin but not laminin) and depletion of fibrinogen, prothrombin (F2) and factor X (F10) in blood circulation. Also possess potent azocaseinolytic activity and cleaves insulin B-chain, hydrolyzing it at positions Gln(4)-His(5), His(10)-Leu(11) and Tyr(16)-Leu(17). In Vipera ammodytes ammodytes (Western sand viper), this protein is Zinc metalloproteinase-disintegrin-like ammodytagin.